The sequence spans 388 residues: Myosin light chain kinase family member 4 (388 aa).

One can recognise a Protein kinase domain in the interval 106-361; the sequence is VSKTEILGGG…ASEALKHPWL (256 aa). Residues 112–120 and Lys-135 each bind ATP; that span reads LGGGRFGQV. The active-site Proton acceptor is Asp-227.

Belongs to the protein kinase superfamily. CAMK Ser/Thr protein kinase family.

It carries out the reaction L-seryl-[protein] + ATP = O-phospho-L-seryl-[protein] + ADP + H(+). The catalysed reaction is L-threonyl-[protein] + ATP = O-phospho-L-threonyl-[protein] + ADP + H(+). This Homo sapiens (Human) protein is Myosin light chain kinase family member 4 (MYLK4).